Here is a 118-residue protein sequence, read N- to C-terminus: Small ribosomal subunit protein uS13 (118 aa).

The segment at 92-118 is disordered; it reads RRNLPVRGQNTKNNARTRKGPTRPLKR. Residues 106–118 are compositionally biased toward basic residues; sequence ARTRKGPTRPLKR.

This sequence belongs to the universal ribosomal protein uS13 family. In terms of assembly, part of the 30S ribosomal subunit. Forms a loose heterodimer with protein S19. Forms two bridges to the 50S subunit in the 70S ribosome.

Functionally, located at the top of the head of the 30S subunit, it contacts several helices of the 16S rRNA. In the 70S ribosome it contacts the 23S rRNA (bridge B1a) and protein L5 of the 50S subunit (bridge B1b), connecting the 2 subunits; these bridges are implicated in subunit movement. Contacts the tRNAs in the A and P-sites. The protein is Small ribosomal subunit protein uS13 of Psychrobacter arcticus (strain DSM 17307 / VKM B-2377 / 273-4).